Reading from the N-terminus, the 479-residue chain is Fibrinogen beta chain (479 aa).

A signal peptide spans 1-18 (MRHLWLLLLSVSLVQTQA). A disordered region spans residues 20–82 (TTDSDKVDLS…VERKPPDAGG (63 aa)). The segment at 33–35 (GHR) is beta-chain polymerization, binding distal domain of another fibrin. Composition is skewed to basic and acidic residues over residues 35 to 45 (RPVDRRKEEPP) and 64 to 78 (AKVD…RKPP). 2 disulfides stabilise this stretch: cysteine 219/cysteine 304 and cysteine 229/cysteine 258. Residues 220-476 (NIPVVSGKEC…RMSMKIRPVF (257 aa)) enclose the Fibrinogen C-terminal domain. Asparagine 382 carries N-linked (GlcNAc...) asparagine glycosylation. Cysteine 412 and cysteine 425 are disulfide-bonded.

Heterohexamer; disulfide linked. Contains 2 sets of 3 non-identical chains (alpha, beta and gamma). The 2 heterotrimers are in head to head conformation with the N-termini in a small central domain. Conversion of fibrinogen to fibrin is triggered by thrombin, which cleaves fibrinopeptides A and B from alpha and beta chains, and thus exposes the N-terminal polymerization sites responsible for the formation of the soft clot.

Its subcellular location is the secreted. Functionally, cleaved by the protease thrombin to yield monomers which, together with fibrinogen alpha (FGA) and fibrinogen gamma (FGG), polymerize to form an insoluble fibrin matrix. Fibrin has a major function in hemostasis as one of the primary components of blood clots. In addition, functions during the early stages of wound repair to stabilize the lesion and guide cell migration during re-epithelialization. Was originally thought to be essential for platelet aggregation, based on in vitro studies using anticoagulated blood. However subsequent studies have shown that it is not absolutely required for thrombus formation in vivo. Enhances expression of SELP in activated platelets. Maternal fibrinogen is essential for successful pregnancy. Fibrin deposition is also associated with infection, where it protects against IFNG-mediated hemorrhage. May also facilitate the antibacterial immune response via both innate and T-cell mediated pathways. The chain is Fibrinogen beta chain (Fgb) from Rattus norvegicus (Rat).